The primary structure comprises 358 residues: Alanine racemase (358 aa).

Lys-35 functions as the Proton acceptor; specific for D-alanine in the catalytic mechanism. Lys-35 carries the N6-(pyridoxal phosphate)lysine modification. Arg-131 is a substrate binding site. The active-site Proton acceptor; specific for L-alanine is the Tyr-253. Met-301 contacts substrate.

This sequence belongs to the alanine racemase family. Pyridoxal 5'-phosphate serves as cofactor.

The catalysed reaction is L-alanine = D-alanine. Its pathway is amino-acid biosynthesis; D-alanine biosynthesis; D-alanine from L-alanine: step 1/1. Catalyzes the interconversion of L-alanine and D-alanine. May also act on other amino acids. The protein is Alanine racemase (alr) of Alteromonas mediterranea (strain DSM 17117 / CIP 110805 / LMG 28347 / Deep ecotype).